The following is a 482-amino-acid chain: ATP synthase subunit beta (482 aa).

162 to 169 is an ATP binding site; it reads GGAGVGKT.

Belongs to the ATPase alpha/beta chains family. In terms of assembly, F-type ATPases have 2 components, CF(1) - the catalytic core - and CF(0) - the membrane proton channel. CF(1) has five subunits: alpha(3), beta(3), gamma(1), delta(1), epsilon(1). CF(0) has four main subunits: a(1), b(1), b'(1) and c(9-12).

The protein localises to the cellular thylakoid membrane. The catalysed reaction is ATP + H2O + 4 H(+)(in) = ADP + phosphate + 5 H(+)(out). Produces ATP from ADP in the presence of a proton gradient across the membrane. The catalytic sites are hosted primarily by the beta subunits. The polypeptide is ATP synthase subunit beta (Synechococcus sp. (strain PCC 6716)).